We begin with the raw amino-acid sequence, 125 residues long: Small ribosomal subunit protein uS13 (125 aa).

Belongs to the universal ribosomal protein uS13 family. In terms of assembly, part of the 30S ribosomal subunit. Forms a loose heterodimer with protein S19. Forms two bridges to the 50S subunit in the 70S ribosome.

Located at the top of the head of the 30S subunit, it contacts several helices of the 16S rRNA. In the 70S ribosome it contacts the 23S rRNA (bridge B1a) and protein L5 of the 50S subunit (bridge B1b), connecting the 2 subunits; these bridges are implicated in subunit movement. Contacts the tRNAs in the A and P-sites. The protein is Small ribosomal subunit protein uS13 of Orientia tsutsugamushi (strain Boryong) (Rickettsia tsutsugamushi).